Here is a 226-residue protein sequence, read N- to C-terminus: Phosphoribosylformylglycinamidine synthase subunit PurQ (226 aa).

Positions 2-226 constitute a Glutamine amidotransferase type-1 domain; the sequence is KIAVVVFPGS…LENGRIKVEA (225 aa). Residue Cys-86 is the Nucleophile of the active site. Active-site residues include His-195 and Glu-197.

In terms of assembly, part of the FGAM synthase complex composed of 1 PurL, 1 PurQ and 2 PurS subunits.

The protein localises to the cytoplasm. It carries out the reaction N(2)-formyl-N(1)-(5-phospho-beta-D-ribosyl)glycinamide + L-glutamine + ATP + H2O = 2-formamido-N(1)-(5-O-phospho-beta-D-ribosyl)acetamidine + L-glutamate + ADP + phosphate + H(+). The enzyme catalyses L-glutamine + H2O = L-glutamate + NH4(+). It participates in purine metabolism; IMP biosynthesis via de novo pathway; 5-amino-1-(5-phospho-D-ribosyl)imidazole from N(2)-formyl-N(1)-(5-phospho-D-ribosyl)glycinamide: step 1/2. In terms of biological role, part of the phosphoribosylformylglycinamidine synthase complex involved in the purines biosynthetic pathway. Catalyzes the ATP-dependent conversion of formylglycinamide ribonucleotide (FGAR) and glutamine to yield formylglycinamidine ribonucleotide (FGAM) and glutamate. The FGAM synthase complex is composed of three subunits. PurQ produces an ammonia molecule by converting glutamine to glutamate. PurL transfers the ammonia molecule to FGAR to form FGAM in an ATP-dependent manner. PurS interacts with PurQ and PurL and is thought to assist in the transfer of the ammonia molecule from PurQ to PurL. In Limosilactobacillus reuteri (strain DSM 20016) (Lactobacillus reuteri), this protein is Phosphoribosylformylglycinamidine synthase subunit PurQ.